We begin with the raw amino-acid sequence, 350 residues long: MAVEYNQSTDYYYEENEMNDTHDYSQYEVICIKEEVRKFAKVFLPAFFTIAFIIGLAGNSTVVAIYAYYKKRRTKTDVYILNLAVADLFLLFTLPFWAVNAVHGWVLGKIMCKVTSALYTVNFVSGMQFLACISTDRYWAVTKAPSQSGVGKPCWVICFCVWVAAILLSIPQLVFYTVNHKARCVPIFPYHLGTSMKASIQILEICIGFIIPFLIMAVCYFITAKTLIKMPNIKKSQPLKVLFTVVIVFIVTQLPYNIVKFCQAIDIIYSLITDCDMSKRMDVAIQITESIALFHSCLNPVLYVFMGTSFKNYIMKVAKKYGSWRRQRQNVEEIPFESEDATEPTSTFSI.

The Extracellular segment spans residues 1–41 (MAVEYNQSTDYYYEENEMNDTHDYSQYEVICIKEEVRKFAK). Residues Asn6 and Asn19 are each glycosylated (N-linked (GlcNAc...) asparagine). A helical transmembrane segment spans residues 42-66 (VFLPAFFTIAFIIGLAGNSTVVAIY). Over 67–79 (AYYKKRRTKTDVY) the chain is Cytoplasmic. The helical transmembrane segment at 80–99 (ILNLAVADLFLLFTLPFWAV) threads the bilayer. Residues 100 to 113 (NAVHGWVLGKIMCK) lie on the Extracellular side of the membrane. Residues Cys112 and Cys184 are joined by a disulfide bond. Residues 114-135 (VTSALYTVNFVSGMQFLACIST) form a helical membrane-spanning segment. Topologically, residues 136 to 153 (DRYWAVTKAPSQSGVGKP) are cytoplasmic. The chain crosses the membrane as a helical span at residues 154 to 175 (CWVICFCVWVAAILLSIPQLVF). Residues 176–199 (YTVNHKARCVPIFPYHLGTSMKAS) lie on the Extracellular side of the membrane. The helical transmembrane segment at 200 to 222 (IQILEICIGFIIPFLIMAVCYFI) threads the bilayer. The Cytoplasmic segment spans residues 223 to 241 (TAKTLIKMPNIKKSQPLKV). The chain crosses the membrane as a helical span at residues 242–265 (LFTVVIVFIVTQLPYNIVKFCQAI). Residues 266–283 (DIIYSLITDCDMSKRMDV) lie on the Extracellular side of the membrane. A helical transmembrane segment spans residues 284 to 306 (AIQITESIALFHSCLNPVLYVFM). Topologically, residues 307–350 (GTSFKNYIMKVAKKYGSWRRQRQNVEEIPFESEDATEPTSTFSI) are cytoplasmic.

It belongs to the G-protein coupled receptor 1 family. Atypical chemokine receptor subfamily. As to quaternary structure, forms heteromers with CXCR3. Interacts with ARRB1 and ARRB2. Post-translationally, the Ser/Thr residues in the C-terminal cytoplasmic tail may be phosphorylated. Expressed in circumvallate and fungiform papillae, olfactory epithelium and lung. Lower expression in liver, kidney and tongue epithelium bearing no taste papillae. Very low expression in the cerebral cortex of the brain.

The protein resides in the early endosome. It is found in the recycling endosome. It localises to the cell membrane. Atypical chemokine receptor that controls chemokine levels and localization via high-affinity chemokine binding that is uncoupled from classic ligand-driven signal transduction cascades, resulting instead in chemokine sequestration, degradation, or transcytosis. Also known as interceptor (internalizing receptor) or chemokine-scavenging receptor or chemokine decoy receptor. Acts as a receptor for chemokines CCL2, CCL8, CCL13, CCL19, CCL21 and CCL25. Chemokine-binding does not activate G-protein-mediated signal transduction but instead induces beta-arrestin recruitment, leading to ligand internalization. Plays an important role in controlling the migration of immune and cancer cells that express chemokine receptors CCR7 and CCR9, by reducing the availability of CCL19, CCL21, and CCL25 through internalization. Negatively regulates CXCR3-induced chemotaxis. Regulates T-cell development in the thymus. This chain is Atypical chemokine receptor 4 (ACKR4), found in Bos taurus (Bovine).